Reading from the N-terminus, the 485-residue chain is MADSAVRVRIAPSPTGEPHVGTAYIALFNYLFAKKHGGEFILRIEDTDATRSTPEFEKKVLDALKWCGLEWSEGPDIGGPCGPYRQSDRKDIYKPYVEQIVANGHGFRCFCTPERLEQMREAQRAAGKPPKYDGLCLSLSAEEVTSRVAAGEPHVVRMKIPTEGSCKFRDGVYGDVEIPWEAVDMQVLLKADGMPTYHMANVVDDHLMKITHVARGEEWLASVPKHILIYQYLGLEPPVFMHLSLMRNADKSKLSKRKNPTSISYYTALGYLPEALMNFLGLFFIQIAEGEELLTMAELAEKFDPENLSKAGAIFDIQKLDWLNARWIREKLSEEQFAAKVLSWAMDNDRLREGLKLSQTRISKLGELPDLAAFLFKSDLGLQPAAFAGVKASPEEMLEILNTVQPDLEKILEWNKESIETELRACAERMGKKLKAVVAPLFVAVSGSQRSLPLFDSMELLGRSVVRQRLKVAAQVVASMAGSGK.

The 'HIGH' region signature appears at 12-22 (PSPTGEPHVGT). The 'KMSKS' region signature appears at 253–257 (KLSKR). Lys-256 contributes to the ATP binding site.

It belongs to the class-I aminoacyl-tRNA synthetase family. Glutamate--tRNA ligase type 1 subfamily. As to quaternary structure, monomer.

It localises to the cytoplasm. The catalysed reaction is tRNA(Glu) + L-glutamate + ATP = L-glutamyl-tRNA(Glu) + AMP + diphosphate. Catalyzes the attachment of glutamate to tRNA(Glu) in a two-step reaction: glutamate is first activated by ATP to form Glu-AMP and then transferred to the acceptor end of tRNA(Glu). The polypeptide is Glutamate--tRNA ligase (Sinorhizobium medicae (strain WSM419) (Ensifer medicae)).